The following is a 240-amino-acid chain: Large ribosomal subunit protein uL2 (240 aa).

Residues 1 to 20 are compositionally biased toward polar residues; sequence MGKRLQSQNRGKGTPRYTSP. Disordered regions lie at residues 1–33 and 204–240; these read MGKRLQSQNRGKGTPRYTSPTHKRKGAVKYRKF and PFGGGNTQHAGKPTTISRHTSPGRKVGHIAARRTGKR. Basic residues-rich tracts occupy residues 21–30 and 224–240; these read THKRKGAVKY and SPGRKVGHIAARRTGKR.

The protein belongs to the universal ribosomal protein uL2 family. In terms of assembly, part of the 50S ribosomal subunit. Forms a bridge to the 30S subunit in the 70S ribosome.

One of the primary rRNA binding proteins. Required for association of the 30S and 50S subunits to form the 70S ribosome, for tRNA binding and peptide bond formation. It has been suggested to have peptidyltransferase activity; this is somewhat controversial. Makes several contacts with the 16S rRNA in the 70S ribosome. This is Large ribosomal subunit protein uL2 from Methanococcus aeolicus (strain ATCC BAA-1280 / DSM 17508 / OCM 812 / Nankai-3).